The chain runs to 418 residues: Glutamyl-tRNA reductase (418 aa).

Substrate is bound by residues 49–52 (TCNR), S107, 112–114 (EPQ), and Q118. The active-site Nucleophile is C50. 187–192 (GAGETI) is a binding site for NADP(+).

Belongs to the glutamyl-tRNA reductase family. Homodimer.

It catalyses the reaction (S)-4-amino-5-oxopentanoate + tRNA(Glu) + NADP(+) = L-glutamyl-tRNA(Glu) + NADPH + H(+). It functions in the pathway porphyrin-containing compound metabolism; protoporphyrin-IX biosynthesis; 5-aminolevulinate from L-glutamyl-tRNA(Glu): step 1/2. In terms of biological role, catalyzes the NADPH-dependent reduction of glutamyl-tRNA(Glu) to glutamate 1-semialdehyde (GSA). The chain is Glutamyl-tRNA reductase from Aeromonas salmonicida (strain A449).